Reading from the N-terminus, the 358-residue chain is Methionine aminopeptidase 2 (358 aa).

Residue H109 participates in substrate binding. A divalent metal cation is bound by residues D130, D141, and H210. H218 lines the substrate pocket. Residues E243 and E339 each coordinate a divalent metal cation.

Belongs to the peptidase M24A family. Methionine aminopeptidase eukaryotic type 2 subfamily. Requires Co(2+) as cofactor. Zn(2+) serves as cofactor. It depends on Mn(2+) as a cofactor. Fe(2+) is required as a cofactor.

Its subcellular location is the cytoplasm. The catalysed reaction is Release of N-terminal amino acids, preferentially methionine, from peptides and arylamides.. Its function is as follows. Cotranslationally removes the N-terminal methionine from nascent proteins. The N-terminal methionine is often cleaved when the second residue in the primary sequence is small and uncharged (Met-Ala-, Cys, Gly, Pro, Ser, Thr, or Val). The sequence is that of Methionine aminopeptidase 2 from Encephalitozoon cuniculi (strain GB-M1) (Microsporidian parasite).